The sequence spans 366 residues: MATSSAHLSFLAGRISPFSSERIGLFPLRGEFRPRMTRFRCSAGPSGFFTRLGRLIKEKAKSDVEKVFSGFSKTRENLAVIDELLLFWNLAETDRVLDELEEALLVSDFGPKITVRIVERLREDIMSGKLKSGSEIKDALKESVLEMLAKKNSKTELQLGFRKPAVIMIVGVNGGGKTTSLGKLAHRLKNEGTKVLMAAGDTFRAAASDQLEIWAERTGCEIVVAEGDKAKAATVLSKAVKRGKEEGYDVVLCDTSGRLHTNYSLMEELIACKKAVGKIVSGAPNEILLVLDGNTGLNMLPQAREFNEVVGITGLILTKLDGSARGGCVVSVVEELGIPVKFIGVGEAVEDLQPFDPEAFVNAIFS.

A chloroplast-targeting transit peptide spans 1-40 (MATSSAHLSFLAGRISPFSSERIGLFPLRGEFRPRMTRFR). Residues 171-178 (GVNGGGKT), 254-258 (DTSGR), and 318-321 (TKLD) each bind GTP.

It belongs to the GTP-binding SRP family. Monomer. Interacts with FFC/cpSRP54, a component of the cpSRP complex, composed of a FFC/cpSRP54 monomer and a CAO/cpSRP43 dimer. The complex with FFC/cpSRP54 is formed when both proteins are bound with GTP. In terms of tissue distribution, expressed in green tissues. Low levels in roots and seeds.

The protein localises to the plastid. It is found in the chloroplast stroma. Its subcellular location is the chloroplast thylakoid membrane. Functionally, signal recognition particle receptor protein. Binds GTP specifically. The GTPase activity is inhibited by the N-terminus of the protein until binding to the thylakoid membrane. Activates the GTPase activity of FFC/cpSRP54 when bound to the cpSRP complex. Required for light-harvesting chlorophyll a/b-binding protein (LHCP) integration into thylakoids. Might be also functionally linked to the Sec translocation machinery. The sequence is that of Cell division protein FtsY homolog, chloroplastic (CPFTSY) from Arabidopsis thaliana (Mouse-ear cress).